The primary structure comprises 347 residues: NADH-ubiquinone oxidoreductase chain 2 (347 aa).

Helical transmembrane passes span 3 to 23 (PLAL…TMMS), 25 to 45 (HWLT…PILM), 59 to 79 (YFMT…INLM), 93 to 115 (VASN…HFWV), 150 to 170 (NTNL…WGGL), 178 to 198 (ILAY…PFNP), 200 to 220 (LTLL…MILA), 240 to 260 (MTIM…LSGF), 274 to 294 (NSII…YFYM), and 326 to 346 (LPTL…ISML).

Belongs to the complex I subunit 2 family. Core subunit of respiratory chain NADH dehydrogenase (Complex I) which is composed of 45 different subunits. Interacts with TMEM242.

The protein resides in the mitochondrion inner membrane. It catalyses the reaction a ubiquinone + NADH + 5 H(+)(in) = a ubiquinol + NAD(+) + 4 H(+)(out). In terms of biological role, core subunit of the mitochondrial membrane respiratory chain NADH dehydrogenase (Complex I) which catalyzes electron transfer from NADH through the respiratory chain, using ubiquinone as an electron acceptor. Essential for the catalytic activity and assembly of complex I. This chain is NADH-ubiquinone oxidoreductase chain 2, found in Mammuthus primigenius (Siberian woolly mammoth).